We begin with the raw amino-acid sequence, 1073 residues long: uncharacterized protein (1073 aa).

Residues Met-1–Ser-36 form the signal peptide. A glycan (N-linked (GlcNAc...) asparagine) is linked at Asn-132. Ala-392–Ser-399 serves as a coordination point for ATP. N-linked (GlcNAc...) asparagine glycans are attached at residues Asn-544, Asn-632, Asn-703, Asn-732, and Asn-953.

This is an uncharacterized protein from Schizosaccharomyces pombe (strain 972 / ATCC 24843) (Fission yeast).